Reading from the N-terminus, the 558-residue chain is Probable rhamnogalacturonase B (558 aa).

The N-terminal stretch at 1–21 (MLLDKLSVLSFLGLAPIFAAA) is a signal peptide. Residues cysteine 42 and cysteine 68 are joined by a disulfide bond. The N-linked (GlcNAc...) asparagine glycan is linked to asparagine 145. Catalysis depends on aspartate 219, which acts as the Proton donor. The cysteines at positions 221 and 238 are disulfide-linked. 2 N-linked (GlcNAc...) asparagine glycosylation sites follow: asparagine 239 and asparagine 254. Histidine 294 is a catalytic residue. Asparagine 321 is a glycosylation site (N-linked (GlcNAc...) asparagine). 2 disulfide bridges follow: cysteine 344/cysteine 350 and cysteine 372/cysteine 381. Low complexity predominate over residues 503–526 (VGAQEGSTTSAPSFAAPSGAGNSP). Residues 503–558 (VGAQEGSTTSAPSFAAPSGAGNSPQGPTGASGFGEKGQQGEQGEQGEQGEQGVCYV) form a disordered region.

The protein belongs to the glycosyl hydrolase 28 family.

It is found in the secreted. It catalyses the reaction Endohydrolysis of alpha-D-GalA-(1-&gt;2)-alpha-L-Rha glycosidic bond in the rhamnogalacturonan I backbone with initial inversion of anomeric configuration releasing oligosaccharides with beta-D-GalA at the reducing end.. Functionally, pectinolytic enzymes consist of four classes of enzymes: pectine lyase, polygalacturonase, pectin methylesterase and rhamnogalacturonase. Hydrolyzes alpha-D-galacturonopyranosyl-(1,2)-alpha-L-rhamnopyranosyl linkages in the backbone of the hairy regions of pectins. The protein is Probable rhamnogalacturonase B (rhgB) of Aspergillus niger (strain ATCC MYA-4892 / CBS 513.88 / FGSC A1513).